The following is a 104-amino-acid chain: uncharacterized protein (104 aa).

The first 18 residues, 1–18, serve as a signal peptide directing secretion; it reads MGVEGMWNVFLFSLQVAA. N-linked (GlcNAc...) asparagine; by host glycosylation occurs at Asn-27.

This is an uncharacterized protein from Fowl adenovirus A serotype 1 (strain CELO / Phelps) (FAdV-1).